We begin with the raw amino-acid sequence, 659 residues long: Methionine--tRNA ligase (659 aa).

The 'HIGH' region signature appears at 13 to 23 (YYPSGNLHIGH). The 'KMSKS' region motif lies at 308-312 (KMSKS). Position 311 (Lys311) interacts with ATP. In terms of domain architecture, tRNA-binding spans 559–659 (DFDKVEIKAA…SAIPNGAVIK (101 aa)).

Belongs to the class-I aminoacyl-tRNA synthetase family. MetG type 2B subfamily. Homodimer.

The protein localises to the cytoplasm. It catalyses the reaction tRNA(Met) + L-methionine + ATP = L-methionyl-tRNA(Met) + AMP + diphosphate. Functionally, is required not only for elongation of protein synthesis but also for the initiation of all mRNA translation through initiator tRNA(fMet) aminoacylation. This Staphylococcus haemolyticus (strain JCSC1435) protein is Methionine--tRNA ligase.